The following is an 89-amino-acid chain: Small ribosomal subunit protein uS15 (89 aa).

The protein belongs to the universal ribosomal protein uS15 family. As to quaternary structure, part of the 30S ribosomal subunit. Forms a bridge to the 50S subunit in the 70S ribosome, contacting the 23S rRNA.

In terms of biological role, one of the primary rRNA binding proteins, it binds directly to 16S rRNA where it helps nucleate assembly of the platform of the 30S subunit by binding and bridging several RNA helices of the 16S rRNA. Its function is as follows. Forms an intersubunit bridge (bridge B4) with the 23S rRNA of the 50S subunit in the ribosome. The protein is Small ribosomal subunit protein uS15 of Streptococcus pneumoniae (strain P1031).